The sequence spans 222 residues: UPF0441 protein CKO_04429 (222 aa).

Positions 177 to 194 (TVPKTAMAPKPATTTTVT) are enriched in low complexity. Residues 177-222 (TVPKTAMAPKPATTTTVTRGGFGESVAKQSTMQRSATGTSNRSMGG) are disordered. Polar residues predominate over residues 203-222 (AKQSTMQRSATGTSNRSMGG).

Belongs to the UPF0441 family.

This Citrobacter koseri (strain ATCC BAA-895 / CDC 4225-83 / SGSC4696) protein is UPF0441 protein CKO_04429.